We begin with the raw amino-acid sequence, 504 residues long: ATP synthase subunit alpha (504 aa).

Position 172–179 (172–179) interacts with ATP; that stretch reads GDRQTGKT.

This sequence belongs to the ATPase alpha/beta chains family. F-type ATPases have 2 components, CF(1) - the catalytic core - and CF(0) - the membrane proton channel. CF(1) has five subunits: alpha(3), beta(3), gamma(1), delta(1), epsilon(1). CF(0) has three main subunits: a(1), b(2) and c(9-12). The alpha and beta chains form an alternating ring which encloses part of the gamma chain. CF(1) is attached to CF(0) by a central stalk formed by the gamma and epsilon chains, while a peripheral stalk is formed by the delta and b chains.

The protein resides in the cell inner membrane. The catalysed reaction is ATP + H2O + 4 H(+)(in) = ADP + phosphate + 5 H(+)(out). In terms of biological role, produces ATP from ADP in the presence of a proton gradient across the membrane. The alpha chain is a regulatory subunit. This chain is ATP synthase subunit alpha, found in Petrotoga mobilis (strain DSM 10674 / SJ95).